The chain runs to 173 residues: NADH-quinone oxidoreductase subunit B (173 aa).

[4Fe-4S] cluster contacts are provided by Cys52, Cys53, Cys117, and Cys147.

Belongs to the complex I 20 kDa subunit family. As to quaternary structure, NDH-1 is composed of 14 different subunits. Subunits NuoB, C, D, E, F, and G constitute the peripheral sector of the complex. The cofactor is [4Fe-4S] cluster.

The protein resides in the cell inner membrane. It carries out the reaction a quinone + NADH + 5 H(+)(in) = a quinol + NAD(+) + 4 H(+)(out). NDH-1 shuttles electrons from NADH, via FMN and iron-sulfur (Fe-S) centers, to quinones in the respiratory chain. Couples the redox reaction to proton translocation (for every two electrons transferred, four hydrogen ions are translocated across the cytoplasmic membrane), and thus conserves the redox energy in a proton gradient. The polypeptide is NADH-quinone oxidoreductase subunit B (Pelagibacter ubique (strain HTCC1062)).